The sequence spans 690 residues: Peroxidase (690 aa).

A signal peptide spans 1–20; it reads MIRARDLLLLALLGFISSAL. The cysteines at positions 100 and 112 are disulfide-linked. The Proton acceptor role is filled by His-185. An N-linked (GlcNAc...) asparagine glycan is attached at Asn-310. Cys-315 and Cys-324 form a disulfide bridge. His-437 serves as a coordination point for heme b. 2 cysteine pairs are disulfide-bonded: Cys-536-Cys-592 and Cys-636-Cys-662.

Belongs to the peroxidase family. XPO subfamily. It depends on heme b as a cofactor.

Its subcellular location is the secreted. The catalysed reaction is 2 a phenolic donor + H2O2 = 2 a phenolic radical donor + 2 H2O. Its function is as follows. Involved in the chorion hardening process, through protein cross-linking mediated by the formation of di- and tri-tyrosine bonds. In Drosophila melanogaster (Fruit fly), this protein is Peroxidase (Pxd).